The chain runs to 269 residues: Phosphate import ATP-binding protein PstB (269 aa).

An ABC transporter domain is found at 21–264; the sequence is IEIKDFNFFY…PKDRRTENYI (244 aa). Position 55–62 (55–62) interacts with ATP; that stretch reads GPSGCGKT.

The protein belongs to the ABC transporter superfamily. Phosphate importer (TC 3.A.1.7) family. The complex is composed of two ATP-binding proteins (PstB), two transmembrane proteins (PstC and PstA) and a solute-binding protein (PstS).

The protein resides in the cell membrane. It carries out the reaction phosphate(out) + ATP + H2O = ADP + 2 phosphate(in) + H(+). Its function is as follows. Part of the ABC transporter complex PstSACB involved in phosphate import. Responsible for energy coupling to the transport system. This chain is Phosphate import ATP-binding protein PstB, found in Mycoplasma capricolum subsp. capricolum (strain California kid / ATCC 27343 / NCTC 10154).